We begin with the raw amino-acid sequence, 38 residues long: Histone H5 (38 aa).

Pro residues predominate over residues 1 to 15; it reads TESPIPVPAPAPAAK. The interval 1-38 is disordered; that stretch reads TESPIPVPAPAPAAKPKPKRVSKRPASHPPYSDMIAAA. Residues 16–26 show a composition bias toward basic residues; the sequence is PKPKRVSKRPA.

It belongs to the histone H1/H5 family. As to expression, erythroid cells.

The protein localises to the nucleus. Its subcellular location is the chromosome. Its function is as follows. Histone H5 performs the same function as H1, being necessary for the condensation of nucleosome chains into higher order structures, and replaces histone H1 in certain cells. This is Histone H5 from Columba livia (Rock dove).